Here is a 112-residue protein sequence, read N- to C-terminus: Nucleoid-associated protein RER_03900 (112 aa).

The protein belongs to the YbaB/EbfC family. As to quaternary structure, homodimer.

The protein resides in the cytoplasm. It is found in the nucleoid. Binds to DNA and alters its conformation. May be involved in regulation of gene expression, nucleoid organization and DNA protection. In Rhodococcus erythropolis (strain PR4 / NBRC 100887), this protein is Nucleoid-associated protein RER_03900.